The following is a 264-amino-acid chain: SPARC (264 aa).

Positions 1-16 are cleaved as a signal peptide; it reads MRYALAACLLLLAASS. In terms of domain architecture, Follistatin-like spans 52-74; that stretch reads PCEDHQCGWGKECVVGKKGEPTC. Intrachain disulfides connect C53-C64, C58-C74, C76-C110, C80-C103, C92-C135, C141-C228, and C236-C252. Residues 68-137 form the Kazal-like domain; sequence KKGEPTCECI…HLEYLGECKK (70 aa). N96 carries an N-linked (GlcNAc...) asparagine glycan. The 36-residue stretch at 224–259 folds into the EF-hand domain; it reads PMESCIKPFLEGCDANNDGNISIKEWGKCLGLKEGE. Positions 237, 239, 241, 243, and 248 each coordinate Ca(2+). N243 carries N-linked (GlcNAc...) asparagine glycosylation.

Belongs to the SPARC family. As to expression, expressed by body wall and sex muscle cells. Probable association with basement membranes.

The protein resides in the secreted. The protein localises to the extracellular space. Its subcellular location is the extracellular matrix. It localises to the basement membrane. Its function is as follows. Has a high affinity for collagen. Affects nematode body morphology and mobility. Essential for C.elegans development and muscle function. The cysteine-rich region could have protease inhibitory activity or may provide the framework for a protein binding module. Probable role in skeletal morphogenesis. In Caenorhabditis elegans, this protein is SPARC (ost-1).